The chain runs to 66 residues: Large ribosomal subunit protein bL35 (66 aa).

The segment covering 1 to 16 has biased composition (basic residues); the sequence is MPKQKTHRASAKRFKR. The tract at residues 1–21 is disordered; that stretch reads MPKQKTHRASAKRFKRTGNGG.

This sequence belongs to the bacterial ribosomal protein bL35 family.

The chain is Large ribosomal subunit protein bL35 from Lactococcus lactis subsp. cremoris (strain MG1363).